Reading from the N-terminus, the 356-residue chain is Cytochrome b translation regulator cbp7 (356 aa).

In terms of assembly, component of a complex, at least composed of cbp7 and cbp8.

It is found in the mitochondrion. Translation factor for cob1/cytochrome b; plays a role in cob1 mRNA stabilization and required for correct folding of the protein. This Schizosaccharomyces pombe (strain 972 / ATCC 24843) (Fission yeast) protein is Cytochrome b translation regulator cbp7.